A 1409-amino-acid polypeptide reads, in one-letter code: Inositol hexakisphosphate and diphosphoinositol-pentakisphosphate kinase 1 (1409 aa).

Residue 64–65 coordinates substrate; it reads KK. ATP contacts are provided by residues R145, K198, H205, R224, 248–251, and 257–259; these read EEFM and DVK. Substrate is bound at residue 224 to 225; the sequence is RK. Residues K259 and R273 each coordinate substrate. ATP is bound by residues S275, D320, and 332–334; that span reads DVN. 337-340 is a substrate binding site; the sequence is SFVK. The polyphosphoinositide-binding domain stretch occupies residues 382-453; that stretch reads PTTSGTMMEL…VLDITRLLLA (72 aa). The interval 891-996 is disordered; sequence GVEEEGSAPA…PTEMKQSGLG (106 aa). 2 positions are modified to phosphoserine: S920 and S963. Over residues 981–996 the composition is skewed to polar residues; that stretch reads FSSSRPPTEMKQSGLG. S1013 and S1049 each carry phosphoserine. Over residues 1110 to 1119 the composition is skewed to polar residues; it reads MHSSQASDNP. Residues 1110-1183 form a disordered region; that stretch reads MHSSQASDNP…PSLNSHVAEE (74 aa). 2 positions are modified to phosphoserine: S1121 and S1128. Low complexity predominate over residues 1144 to 1162; the sequence is SSGPSSTVSSAGPSSPTTV. The span at 1163-1178 shows a compositional bias: polar residues; it reads DGNSQFGFSDQPSLNS.

This sequence belongs to the histidine acid phosphatase family. VIP1 subfamily.

The protein localises to the cytoplasm. It localises to the cytosol. Its subcellular location is the cell membrane. The enzyme catalyses 1D-myo-inositol hexakisphosphate + ATP = 1-diphospho-1D-myo-inositol 2,3,4,5,6-pentakisphosphate + ADP. It catalyses the reaction 5-diphospho-1D-myo-inositol 1,2,3,4,6-pentakisphosphate + ATP + H(+) = 1,5-bis(diphospho)-1D-myo-inositol 2,3,4,6-tetrakisphosphate + ADP. In terms of biological role, bifunctional inositol kinase that acts in concert with the IP6K kinases IP6K1, IP6K2 and IP6K3 to synthesize the diphosphate group-containing inositol pyrophosphates diphosphoinositol pentakisphosphate, PP-InsP5, and bis-diphosphoinositol tetrakisphosphate, (PP)2-InsP4. PP-InsP5 and (PP)2-InsP4, also respectively called InsP7 and InsP8, regulate a variety of cellular processes, including apoptosis, vesicle trafficking, cytoskeletal dynamics, exocytosis, insulin signaling and neutrophil activation. Phosphorylates inositol hexakisphosphate (InsP6) at position 1 to produce PP-InsP5 which is in turn phosphorylated by IP6Ks to produce (PP)2-InsP4. Alternatively, phosphorylates PP-InsP5 at position 1, produced by IP6Ks from InsP6, to produce (PP)2-InsP4. Activated when cells are exposed to hyperosmotic stress. The sequence is that of Inositol hexakisphosphate and diphosphoinositol-pentakisphosphate kinase 1 from Pongo abelii (Sumatran orangutan).